A 253-amino-acid chain; its full sequence is Nurim homolog (253 aa).

Residues 1–2 are Nuclear-facing; it reads MA. Residues 3–30 traverse the membrane as a helical segment; it reads TFAKVMLLLSSVATFGYTFFVVGKLMLF. Topologically, residues 31–56 are perinuclear space; the sequence is LSTPRSISKAHTWIFNLLDNKSRLET. The chain crosses the membrane as a helical span at residues 57–78; it reads AYGPIVFDTLYLIGFIFQHSFL. The Nuclear portion of the chain corresponds to 79-96; it reads KSALVKNLWRKLGLAAAE. Residues 97–113 form a helical membrane-spanning segment; it reads RTIYSLTSSICLHYLLK. At 114–132 the chain is on the perinuclear space side; sequence NWLPAQSIVLWQVDVDESA. The helical transmembrane segment at 133–161 threads the bilayer; that stretch reads PLWWTFVVTHGLGWAVIFGGSLIMDLPEL. The Nuclear segment spans residues 162-188; the sequence is LGVKQVYYDLKEYGEPVAYKSSELRNL. Residues 189–207 form a helical membrane-spanning segment; sequence YSHVRHPSFVGLSVILFAT. Over 208-213 the chain is Perinuclear space; it reads NVMSLD. A helical transmembrane segment spans residues 214-231; that stretch reads RLLLASLLTVYMYVAWST. The Nuclear portion of the chain corresponds to 232–253; that stretch reads DDKDVAYQKQQLRNKKHELKAQ.

The protein belongs to the nurim family.

Its subcellular location is the nucleus inner membrane. This is Nurim homolog (nrm) from Drosophila pseudoobscura pseudoobscura (Fruit fly).